The chain runs to 196 residues: RNA pyrophosphohydrolase (196 aa).

Positions 6 to 149 constitute a Nudix hydrolase domain; the sequence is GYRPNVGIVI…KRDVYRKVMK (144 aa). Residues 38-59 carry the Nudix box motif; it reads GGINDNESAEQAMYRELHEEVG.

The protein belongs to the Nudix hydrolase family. RppH subfamily. A divalent metal cation serves as cofactor.

Accelerates the degradation of transcripts by removing pyrophosphate from the 5'-end of triphosphorylated RNA, leading to a more labile monophosphorylated state that can stimulate subsequent ribonuclease cleavage. This is RNA pyrophosphohydrolase from Haemophilus influenzae (strain PittEE).